The chain runs to 498 residues: ATP synthase subunit beta, chloroplastic (498 aa).

172–179 (GGAGVGKT) lines the ATP pocket.

It belongs to the ATPase alpha/beta chains family. As to quaternary structure, F-type ATPases have 2 components, CF(1) - the catalytic core - and CF(0) - the membrane proton channel. CF(1) has five subunits: alpha(3), beta(3), gamma(1), delta(1), epsilon(1). CF(0) has four main subunits: a(1), b(1), b'(1) and c(9-12).

Its subcellular location is the plastid. The protein resides in the chloroplast thylakoid membrane. It catalyses the reaction ATP + H2O + 4 H(+)(in) = ADP + phosphate + 5 H(+)(out). In terms of biological role, produces ATP from ADP in the presence of a proton gradient across the membrane. The catalytic sites are hosted primarily by the beta subunits. This Gossypium barbadense (Sea Island cotton) protein is ATP synthase subunit beta, chloroplastic.